A 150-amino-acid polypeptide reads, in one-letter code: Truncated transcription factor CAULIFLOWER A (150 aa).

Residues 1-61 (MGRGRVEMKR…GKLFEYSSES (61 aa)) enclose the MADS-box domain. Residues 90–150 (QTNWSMEYSR…IRSRKNQLMH (61 aa)) form the K-box; partial domain.

As to quaternary structure, homodimer capable of binding to CArG-box sequences. In terms of tissue distribution, expressed in some of the meristems of arrest-stage cauliflower heads.

It is found in the nucleus. In terms of biological role, probable transcription factor that promotes early floral meristem identity in synergy with APETALA1, FRUITFULL and LEAFY. Is required subsequently for the transition of an inflorescence meristem into a floral meristem. Seems to be partially redundant to the function of APETALA1. The chain is Truncated transcription factor CAULIFLOWER A (CAL-A) from Brassica oleracea var. botrytis (Cauliflower).